The sequence spans 105 residues: Large ribosomal subunit protein eL36 (105 aa).

It belongs to the eukaryotic ribosomal protein eL36 family. As to quaternary structure, component of the large ribosomal subunit.

It localises to the cytoplasm. The protein localises to the cytosol. Component of the large ribosomal subunit. The ribosome is a large ribonucleoprotein complex responsible for the synthesis of proteins in the cell. The chain is Large ribosomal subunit protein eL36 (RPL36) from Hydrophis hardwickii (Hardwick's spine-bellied seasnake).